The following is a 506-amino-acid chain: Cysteine--tRNA ligase (506 aa).

Cysteine 34 contributes to the Zn(2+) binding site. The 'HIGH' region motif lies at 36–46 (PTVYDFAHIGN). Positions 230, 269, and 273 each coordinate Zn(2+). The short motif at 302–306 (KMSKS) is the 'KMSKS' region element. Lysine 305 serves as a coordination point for ATP.

The protein belongs to the class-I aminoacyl-tRNA synthetase family. As to quaternary structure, monomer. It depends on Zn(2+) as a cofactor.

Its subcellular location is the cytoplasm. The catalysed reaction is tRNA(Cys) + L-cysteine + ATP = L-cysteinyl-tRNA(Cys) + AMP + diphosphate. The sequence is that of Cysteine--tRNA ligase from Brucella ovis (strain ATCC 25840 / 63/290 / NCTC 10512).